A 308-amino-acid chain; its full sequence is Putative hydrolase MT0526 (308 aa).

Residues 1–48 (MMVSSHLGSPDQAGHVDLASPADPPPPDASASHSPVDMPAPVAAAGSD) form a disordered region. The Nucleophile role is filled by aspartate 62. Residues aspartate 62, aspartate 64, and aspartate 237 each contribute to the Mg(2+) site. Aspartate 64 (proton donor) is an active-site residue.

It belongs to the HAD-like hydrolase superfamily. SerB family. Mg(2+) is required as a cofactor.

The polypeptide is Putative hydrolase MT0526 (Mycobacterium tuberculosis (strain CDC 1551 / Oshkosh)).